A 2280-amino-acid chain; its full sequence is MRGHQFKSWIFELREILREIKNSHHFLDSWTQFNSAGSFIHIFFHQERFLKLFDPRIWSILLSRNSQGSTSNRYFTIKGVILFVVAVLIYRINNRNMVERKNLYLIGLLPIPMNSIGPRNDTLEESVGSSNINRLIVSLLYLPKGKKISESCFLNPKESTWVLPITKKCSMPESNWGSRWWRNWIGKKRDSSCKISNETVAGIEILFKEKDLKYLEFLFVYYMDDPIRKDHDWELFDRLSLRKSRNRINLNSGPLFEILVKHWISYLMSAFREKIPIEVEGFFKQQGAGSTIQSNDIEHVSHLFSRNKWAISLQNCAQFHMWQFRQDLFVSWGKNPPESDFLRNVSRENWIWLDNVWLVNKDRFFSKVQNVSSNIQYDSTRSSFVQVTDSSQLKGSSDQSRDHLDSISNEDSEYHTLINQREIQQRKERSILWDPSFLQTERKEIESGRFPKCLSGYSSMSRLFTEREKQMINHLFPEEIEEFLGNPTRSVRSFFSDRWSELHLGSNPTERSTRDQKLLKKQQDLSFVPSKRSENKEMVNIFKIITYLQNTVSIHPISSDPGCDMVPKDEPDMDSSNKISFLNKNPFFDLFHLFHDRNRGGYTLHYDFESEERFQEMADLFTLSITEPDLVYHKGFAFSIDSCGLDQKQFLNEARDESKKKSLLVLPPIFYEENESFSRRIRKKWVRISCGNDLEDPKPKIVVFASNNIMEAVTQYRLIRNLIQIQYSTYGYIRNVLNRFFLMNRSDRNFEYGIQRDQIGKDTLNHRTIMKYTINQYLSNLKKSQKKWFEPLILISRTERSMNRDPDAYRYKWSNGSKNFQEHLEQSVSEQKSRFQVVFDRLRINQYSIDWSEVIDKKDLSKPLRFFLSKSLLFLSKLLFFLSNSLPFFCVSFGNIPIHRSEIYIYELKGPNDQLCNQLLESIGLQIVHLKKWKPFLLDDHDTSQKSKFLINGGTISPFLFNKIPKWMIDSFHTRNNRRKSFDNPDSYFSMIFHDQDNWLNPVKPFHRSSLISSFYKANRLRFLNNPHHFCFYWNTRFPFSVEKARINNSDFTYGQFLNILFIRNKIFSLCVGKKKHAFWGRDTISPIESQVSNIFIPNDFPQSGDETYNLYKSFHFPSRSDPFVRRAIYSIADISGTPLTEGQIVNFERTYCQPLSDMNLSDSEGKNLHQYLNFNSNMGLIHTPCSEKDLSSEKRKKRSLCLKKCVEKGQMYRTFQRDSAFSTLSKWNLFQTYMPWFLTSTGYKYLNLIFLDTFSDLLPILSSSQKFVPIFHDIMHGSGISWRILQKKLCLPQWNLISEISSKCLHNLLLSEEMIHRNNESPLISTHLRSPNAREFLYSILFLLLVAGYLVRTHLLFVSRASSELQTEFEKVKSLMIPSSMIELRKLLDRYPTSEPNSFWLKNLFLVALEQLGDSLEEIRGSASGGNMLGPAYGVKSIRSKKKDWNINLIEIIDLIPNPINRITFSRNTRHLSHTSKEIYSLIRKRKNVNGDWIDDKIESWVANSDSIDDEEREFLVQFSTLTTENRIDQILLSLTHSDRLSKNDSGYQMIEQPGAIYLRYLVDIHKKHLMNYEFNPSCLAERRIFLAHYQTITYSQTSCGENSFHFPSHGKPFSLRLALSPSRGILVIGSIGTGRSYLVKYLATNSYVPFITVFLNKFLDNKPKGFLLDEIDIDDSDDIDDSDNLDASDDIDRDLDTELKLLTRMNGLTMDMMPEIDRFYITLQFELAKAMSPCIIWIPNIHDLDVNESNDLALGLLVNHLSRDCERCSTRNILVIASTHIPQKVDPALIAPNKLNTCIKIRRLLLPQQRKHFFTLSYTRGFHLEKKMFHTNGFGSITMGSNARDLVALTNEVLSISITQKKSIIDTNTIRSALHRQTWDLRSQVRSVQDHGILFYQIGRAVAQNVLLSNCPIDPISIYMKKKSCNEGDSYLYKWYFELGTSMKRLTILLYLLSCSAGSVAQDLWSLSGPDEKNGITSYGLVENDSDLVHGLLEVEGALVGSSRTEKDCSQFDNDRVTLLLRPEPRNPLDMMQNGSCSILDQRFLYEKYESEFEEGEGEGALDPQEDLFNHIVWAPRIWRPWGFLFDCIERPNELGFPYWSRSFRGKRIIYDEEDELQENDSEFLQSGTMQYQTRDRSSKEQGLFRISQFIWDPADPLFFLFKDQPPGSVFSHRELFADEEMSKGLLTSQTDPPTSIYKRWFIKNTQEKHFELLINRQRWLRTNSSLSNGSFRSNTLSESYQYLSNLFLSNGTLLDQMTKTLLRKRWLFPDEMKIGFM.

1631 to 1638 is an ATP binding site; it reads GSIGTGRS.

The protein belongs to the Ycf2 family.

Its subcellular location is the plastid. The protein resides in the chloroplast stroma. In terms of biological role, probable ATPase of unknown function. Its presence in a non-photosynthetic plant (Epifagus virginiana) and experiments in tobacco indicate that it has an essential function which is probably not related to photosynthesis. The protein is Protein Ycf2 (ycf2-A) of Nicotiana tabacum (Common tobacco).